Reading from the N-terminus, the 148-residue chain is NADPH-dependent 7-cyano-7-deazaguanine reductase (148 aa).

C50 functions as the Thioimide intermediate in the catalytic mechanism. The active-site Proton donor is the D57. Substrate contacts are provided by residues 72-74 (VES) and 91-92 (HE).

This sequence belongs to the GTP cyclohydrolase I family. QueF type 1 subfamily.

Its subcellular location is the cytoplasm. It catalyses the reaction 7-aminomethyl-7-carbaguanine + 2 NADP(+) = 7-cyano-7-deazaguanine + 2 NADPH + 3 H(+). The protein operates within tRNA modification; tRNA-queuosine biosynthesis. Functionally, catalyzes the NADPH-dependent reduction of 7-cyano-7-deazaguanine (preQ0) to 7-aminomethyl-7-deazaguanine (preQ1). The protein is NADPH-dependent 7-cyano-7-deazaguanine reductase of Helicobacter pylori (strain G27).